Reading from the N-terminus, the 83-residue chain is MSIENLLSSVSLDTLLVIGGYVALGGLYLVVMPLLLFFWMNWRWHVMGKIERFSVYGLVFFFFPGMIVFAPFLNLRLSGQGEV.

Transmembrane regions (helical) follow at residues 18-38 (IGGY…LLFF) and 53-73 (FSVY…APFL).

The protein belongs to the complex I NdhL subunit family. In terms of assembly, NDH-1 can be composed of about 15 different subunits; different subcomplexes with different compositions have been identified which probably have different functions.

It is found in the cellular thylakoid membrane. The catalysed reaction is a plastoquinone + NADH + (n+1) H(+)(in) = a plastoquinol + NAD(+) + n H(+)(out). The enzyme catalyses a plastoquinone + NADPH + (n+1) H(+)(in) = a plastoquinol + NADP(+) + n H(+)(out). In terms of biological role, NDH-1 shuttles electrons from an unknown electron donor, via FMN and iron-sulfur (Fe-S) centers, to quinones in the respiratory and/or the photosynthetic chain. The immediate electron acceptor for the enzyme in this species is believed to be plastoquinone. Couples the redox reaction to proton translocation, and thus conserves the redox energy in a proton gradient. Cyanobacterial NDH-1 also plays a role in inorganic carbon-concentration. The chain is NAD(P)H-quinone oxidoreductase subunit L from Synechococcus sp. (strain CC9311).